The sequence spans 219 residues: Imidazole glycerol phosphate synthase subunit HisH (219 aa).

A Glutamine amidotransferase type-1 domain is found at 4–216 (TVTVLDYGSG…VDSLPATGRN (213 aa)). The active-site Nucleophile is Cys-82. Active-site residues include His-191 and Glu-193.

In terms of assembly, heterodimer of HisH and HisF.

The protein localises to the cytoplasm. It carries out the reaction 5-[(5-phospho-1-deoxy-D-ribulos-1-ylimino)methylamino]-1-(5-phospho-beta-D-ribosyl)imidazole-4-carboxamide + L-glutamine = D-erythro-1-(imidazol-4-yl)glycerol 3-phosphate + 5-amino-1-(5-phospho-beta-D-ribosyl)imidazole-4-carboxamide + L-glutamate + H(+). The catalysed reaction is L-glutamine + H2O = L-glutamate + NH4(+). Its pathway is amino-acid biosynthesis; L-histidine biosynthesis; L-histidine from 5-phospho-alpha-D-ribose 1-diphosphate: step 5/9. IGPS catalyzes the conversion of PRFAR and glutamine to IGP, AICAR and glutamate. The HisH subunit catalyzes the hydrolysis of glutamine to glutamate and ammonia as part of the synthesis of IGP and AICAR. The resulting ammonia molecule is channeled to the active site of HisF. This is Imidazole glycerol phosphate synthase subunit HisH from Renibacterium salmoninarum (strain ATCC 33209 / DSM 20767 / JCM 11484 / NBRC 15589 / NCIMB 2235).